The sequence spans 287 residues: Shikimate dehydrogenase (NADP(+)) (287 aa).

Shikimate-binding positions include 20-22 (SRS) and Thr67. The Proton acceptor role is filled by Lys71. Glu84 is an NADP(+) binding site. Positions 93 and 108 each coordinate shikimate. Residues 132 to 136 (GAGGA), 156 to 161 (NRTAAR), and Met226 each bind NADP(+). Tyr228 is a shikimate binding site. Gly250 provides a ligand contact to NADP(+).

Belongs to the shikimate dehydrogenase family. Homodimer.

The catalysed reaction is shikimate + NADP(+) = 3-dehydroshikimate + NADPH + H(+). Its pathway is metabolic intermediate biosynthesis; chorismate biosynthesis; chorismate from D-erythrose 4-phosphate and phosphoenolpyruvate: step 4/7. Involved in the biosynthesis of the chorismate, which leads to the biosynthesis of aromatic amino acids. Catalyzes the reversible NADPH linked reduction of 3-dehydroshikimate (DHSA) to yield shikimate (SA). In Bordetella bronchiseptica (strain ATCC BAA-588 / NCTC 13252 / RB50) (Alcaligenes bronchisepticus), this protein is Shikimate dehydrogenase (NADP(+)).